Here is a 446-residue protein sequence, read N- to C-terminus: Tubulin beta chain (446 aa).

Residues Q11, E69, S138, G142, T143, G144, N204, and N226 each coordinate GTP. E69 serves as a coordination point for Mg(2+). Residues 423–446 (QQYQDAGVDEEEEEYEEEPLPEDE) are disordered. Over residues 429–446 (GVDEEEEEYEEEPLPEDE) the composition is skewed to acidic residues.

Belongs to the tubulin family. Dimer of alpha and beta chains. A typical microtubule is a hollow water-filled tube with an outer diameter of 25 nm and an inner diameter of 15 nM. Alpha-beta heterodimers associate head-to-tail to form protofilaments running lengthwise along the microtubule wall with the beta-tubulin subunit facing the microtubule plus end conferring a structural polarity. Microtubules usually have 13 protofilaments but different protofilament numbers can be found in some organisms and specialized cells. Requires Mg(2+) as cofactor.

The protein resides in the cytoplasm. It localises to the cytoskeleton. In terms of biological role, tubulin is the major constituent of microtubules, a cylinder consisting of laterally associated linear protofilaments composed of alpha- and beta-tubulin heterodimers. Microtubules grow by the addition of GTP-tubulin dimers to the microtubule end, where a stabilizing cap forms. Below the cap, tubulin dimers are in GDP-bound state, owing to GTPase activity of alpha-tubulin. The polypeptide is Tubulin beta chain (TUBB) (Pestalotiopsis microspora).